Here is a 509-residue protein sequence, read N- to C-terminus: Kelch repeat protein M-T9 (509 aa).

Positions 15–79 constitute a BTB domain; that stretch reads SDVTVVAGDS…MYAGCDGLND (65 aa). 5 Kelch repeats span residues 274–320, 321–368, 370–415, 416–463, and 465–509; these read VLYC…IVNG, YIYV…YRNE, WIVG…VYNN, RLYC…VYNK, and IYVL…NDEI.

This sequence belongs to the poxviruses Kelch family.

This is Kelch repeat protein M-T9 from Myxoma virus (strain Lausanne) (MYXV).